We begin with the raw amino-acid sequence, 319 residues long: tRNA pseudouridine synthase B (319 aa).

D49 acts as the Nucleophile in catalysis.

The protein belongs to the pseudouridine synthase TruB family. Type 1 subfamily.

The catalysed reaction is uridine(55) in tRNA = pseudouridine(55) in tRNA. Its function is as follows. Responsible for synthesis of pseudouridine from uracil-55 in the psi GC loop of transfer RNAs. This Bartonella henselae (strain ATCC 49882 / DSM 28221 / CCUG 30454 / Houston 1) (Rochalimaea henselae) protein is tRNA pseudouridine synthase B.